Here is a 273-residue protein sequence, read N- to C-terminus: Eukaryotic translation initiation factor 3 subunit G-2 (273 aa).

A disordered region spans residues 165–193 (KYVPPFMKDGGGGPGGKNWGRGRERDDSS). Gly residues predominate over residues 173 to 183 (DGGGGPGGKNW). Residues 193 to 271 (SAVRISNLSE…LILCVEWSKP (79 aa)) enclose the RRM domain.

The protein belongs to the eIF-3 subunit G family. As to quaternary structure, component of the eukaryotic translation initiation factor 3 (eIF-3) complex. The eIF-3 complex interacts with pix.

It is found in the cytoplasm. Its function is as follows. RNA-binding component of the eukaryotic translation initiation factor 3 (eIF-3) complex, which is involved in protein synthesis of a specialized repertoire of mRNAs and, together with other initiation factors, stimulates binding of mRNA and methionyl-tRNAi to the 40S ribosome. The eIF-3 complex specifically targets and initiates translation of a subset of mRNAs involved in cell proliferation. This subunit can bind 18S rRNA. This is Eukaryotic translation initiation factor 3 subunit G-2 from Drosophila yakuba (Fruit fly).